The sequence spans 309 residues: Dicarboxylate carrier UCP2 (309 aa).

Residues 1-16 (MVGFKATDVPPTATVK) lie on the Mitochondrial intermembrane side of the membrane. 3 Solcar repeats span residues 11–106 (PTAT…VKQF), 114–203 (AGIG…IKDT), and 212–297 (DDLP…LKRA). The segment at 16–63 (KFLGAGTAACIADLITFPLDTAKVRLQIQGESQGLARTAASAQYRGVL) is important for interaction with long-chain fatty acids. A helical transmembrane segment spans residues 17–40 (FLGAGTAACIADLITFPLDTAKVR). Residues 41-77 (LQIQGESQGLARTAASAQYRGVLGTILTMVRTEGPRS) lie on the Mitochondrial matrix side of the membrane. The helical transmembrane segment at 78 to 103 (LYNGLVAGLQRQMSFASVRIGLYDSV) threads the bilayer. The Mitochondrial intermembrane portion of the chain corresponds to 104 to 119 (KQFYTKGSEHAGIGSR). A helical membrane pass occupies residues 120–145 (LLAGSTTGALAVAVAQPTDVVKVRFQ). At 146-173 (AQARAGGGRRYQSTVEAYKTIAREEGIR) the chain is on the mitochondrial matrix side. A helical transmembrane segment spans residues 174–199 (GLWKGTSPNVARNAIVNCTELVTYDL). Over 200 to 217 (IKDTLLKANLMTDDLPCH) the chain is Mitochondrial intermembrane. The chain crosses the membrane as a helical span at residues 218–242 (FTSAFGAGFCTTVIASPVDVVKTRY). Residues 243 to 268 (MNSALGQYHSAGHCALTMLRKEGPRA) lie on the Mitochondrial matrix side of the membrane. Residues 269-294 (FYKGFMPSFLRLGSWNVVMFVTYEQL) form a helical membrane-spanning segment. Positions 278-285 (LRLGSWNV) are important for interaction with long-chain fatty acids. Over 295–309 (KRALMAAYESREAPF) the chain is Mitochondrial intermembrane.

It belongs to the mitochondrial carrier (TC 2.A.29) family. In terms of assembly, homotetramer. Adopts an asymmetrical dimer of dimers functional form. Interacts with MICU1 (when methylated); leading to decrease the calcium sensitivity of MICU1. In terms of tissue distribution, expressed in a variety of organs, with predominant expression in the heart, lung and spleen.

The protein resides in the mitochondrion inner membrane. It catalyses the reaction L-aspartate(out) + phosphate(in) + H(+)(in) = L-aspartate(in) + phosphate(out) + H(+)(out). The catalysed reaction is oxaloacetate(out) + phosphate(in) + H(+)(in) = oxaloacetate(in) + phosphate(out) + H(+)(out). The enzyme catalyses (S)-malate(out) + phosphate(in) + H(+)(in) = (S)-malate(in) + phosphate(out) + H(+)(out). It carries out the reaction malonate(out) + phosphate(in) + H(+)(in) = malonate(in) + phosphate(out) + H(+)(out). It catalyses the reaction sulfate(out) + phosphate(in) + H(+)(in) = sulfate(in) + phosphate(out) + H(+)(out). The catalysed reaction is (S)-malate(out) = (S)-malate(in). The enzyme catalyses L-aspartate(out) = L-aspartate(in). It carries out the reaction phosphate(in) = phosphate(out). It catalyses the reaction chloride(in) = chloride(out). The catalysed reaction is H(+)(in) = H(+)(out). The enzyme catalyses a long-chain fatty acid(out) = a long-chain fatty acid(in). Antiporter that exports dicarboxylate intermediates of the Krebs cycle in exchange for phosphate plus a proton across the inner membrane of mitochondria, a process driven by mitochondrial motive force with an overall impact on glycolysis, glutaminolysis and glutathione-dependent redox balance. Continuous export of oxaloacetate and related four-carbon dicarboxylates from mitochondrial matrix into the cytosol negatively regulates the oxidation of acetyl-CoA substrates via the Krebs cycle lowering the ATP/ADP ratio and reactive oxygen species (ROS) production. May mediate inducible proton entry into the mitochondrial matrix affecting ATP turnover as a protection mechanism against oxidative stress. The proton currents are most likely associated with fatty acid flipping across the inner membrane of mitochondria in a metabolic process regulated by free fatty acids and purine nucleotides. Regulates the use of glucose as a source of energy. Required for glucose-induced DRP1-dependent mitochondrial fission and neuron activation in the ventromedial nucleus of the hypothalamus (VMH). This mitochondrial adaptation mechanism modulates the VMH pool of glucose-excited neurons with an impact on systemic glucose homeostasis. Regulates ROS levels and metabolic reprogramming of macrophages during the resolution phase of inflammation. Attenuates ROS production in response to IL33 to preserve the integrity of the Krebs cycle required for persistent production of itaconate and subsequent GATA3-dependent differentiation of inflammation-resolving alternatively activated macrophages. Can unidirectionally transport anions including L-malate, L-aspartate, phosphate and chloride ions. Does not mediate adaptive thermogenesis. The protein is Dicarboxylate carrier UCP2 (Ucp2) of Rattus norvegicus (Rat).